Here is a 1051-residue protein sequence, read N- to C-terminus: MKETPKKVLVIGSGPIKIAEAAEFDYSGSQALKALKEEGIETVLVNSNVATVQTSKKFADKLYMLPVVWWAVEKVIEKERPDGIMIGFGGQTALNVGVDLHKKGVLQKYGVKVLGTQIDGIEKALSREKFRETMIENNLPVPPSLSARSEEEAIKNAKIVGYPVMVRVSFNLGGRGSMVAWTEEDLKKNIRRALSQSYIGEVLIEKYLYHWIELEYEVMRDKKGNSAVIACIENLDPMGVHTGESTVVAPCQTLDNLEYQNMRTYTIEVARSINLIGECNVQFALNPRGYEYYIIETNPRMSRSSALASKATGYPLAYVSAKLALGYELHEVINKVSGRTCACFEPSLDYIVTKIPRWDLSKFENVDQSLATEMMSVGEVMSIGRSFEESLQKAVRMLDIGEPGVVGGKIYEAKMSKVEALKYLKERRPYWFLYVAKAFKEGATIDEVYEVTGISKFFLNKIKGLVDFYETLKILKEIDEETLKLAKKLGFSDEQISKALNKSTEYVRKIRDQSNIIPVVKLIDTLAGEWPSVTNYMYLTYNGTEDDLEFSQGNKLLMVGAGGFRIGVSVEFDWSVVSLMEAASKYFDEVAVLNYNPETVSTDWDIARKLYFDEINVERVLDLIKKEKFRYVATFSGGQIGNSIAKELEENGVRLLGTSGSSVDIAENREKFSKLLDKLGISQPNWVSATSLEEIKKFVNEVGFPVLVRPSYVLSGSSMKIAYSEEELYEYVRRATEISPKYPVVISKYIENAIEAEVDGVSDGNRVLGITLEHVEEAGVHSGDATMSIPFRKLSENSVNKMRENVLSLARELNIKGPFNVQFVVKDNTPHIIELNLRASRSMPFSSKAKGINLINESMKAIFNGLDFSEDYYEPPSKYWAVKSPQFSWSQLRGTYPFLGPEMKSTGEAASFGVTFYDALLKSWLSSIPNRIPNKNGIALVYGDKNLDYLKDTAVNLVKFGLTVYSISELPLQGIETIDKTKAEELVRAKKVEIVVTDGYLKKFDYNIRRTAVDYNIPVILNGRLGYEVSKAFLDYDSLTFFEISEYGGGI.

Positions Met1–Asp399 are carboxyphosphate synthetic domain. 12 residues coordinate ATP: Arg127, Arg167, Gly173, Gly174, Lys206, Leu208, Glu213, Gly239, Val240, His241, Gln282, and Glu296. The ATP-grasp 1 domain maps to Arg131 to Leu325. Positions 282, 296, and 298 each coordinate Mg(2+). Mn(2+) is bound by residues Gln282, Glu296, and Asn298. An oligomerization domain region spans residues Ile400–Leu548. The segment at Glu549–Asn930 is carbamoyl phosphate synthetic domain. Residues Ser673–Phe863 enclose the ATP-grasp 2 domain. ATP contacts are provided by Arg709, Lys748, Ile750, Glu755, Gly779, Val780, His781, Ser782, Gln822, and Glu834. Mg(2+) is bound by residues Gln822, Glu834, and Asn836. Mn(2+) is bound by residues Gln822, Glu834, and Asn836. The region spanning Asn930–Ile1051 is the MGS-like domain. Residues Arg931–Ile1051 are allosteric domain.

It belongs to the CarB family. As to quaternary structure, composed of two chains; the small (or glutamine) chain promotes the hydrolysis of glutamine to ammonia, which is used by the large (or ammonia) chain to synthesize carbamoyl phosphate. Tetramer of heterodimers (alpha,beta)4. The cofactor is Mg(2+). It depends on Mn(2+) as a cofactor.

It catalyses the reaction hydrogencarbonate + L-glutamine + 2 ATP + H2O = carbamoyl phosphate + L-glutamate + 2 ADP + phosphate + 2 H(+). It carries out the reaction hydrogencarbonate + NH4(+) + 2 ATP = carbamoyl phosphate + 2 ADP + phosphate + 2 H(+). It functions in the pathway amino-acid biosynthesis; L-arginine biosynthesis; carbamoyl phosphate from bicarbonate: step 1/1. Its pathway is pyrimidine metabolism; UMP biosynthesis via de novo pathway; (S)-dihydroorotate from bicarbonate: step 1/3. Large subunit of the glutamine-dependent carbamoyl phosphate synthetase (CPSase). CPSase catalyzes the formation of carbamoyl phosphate from the ammonia moiety of glutamine, carbonate, and phosphate donated by ATP, constituting the first step of 2 biosynthetic pathways, one leading to arginine and/or urea and the other to pyrimidine nucleotides. The large subunit (synthetase) binds the substrates ammonia (free or transferred from glutamine from the small subunit), hydrogencarbonate and ATP and carries out an ATP-coupled ligase reaction, activating hydrogencarbonate by forming carboxy phosphate which reacts with ammonia to form carbamoyl phosphate. The sequence is that of Carbamoyl phosphate synthase large chain from Saccharolobus islandicus (strain M.16.4 / Kamchatka #3) (Sulfolobus islandicus).